Reading from the N-terminus, the 527-residue chain is Peptide chain release factor 3 (527 aa).

Residues 9–277 (AKRRTFAIIS…AVVDWAPRPL (269 aa)) enclose the tr-type G domain. GTP-binding positions include 18–25 (SHPDAGKT), 86–90 (DTPGH), and 140–143 (NKLD).

This sequence belongs to the TRAFAC class translation factor GTPase superfamily. Classic translation factor GTPase family. PrfC subfamily.

It is found in the cytoplasm. Functionally, increases the formation of ribosomal termination complexes and stimulates activities of RF-1 and RF-2. It binds guanine nucleotides and has strong preference for UGA stop codons. It may interact directly with the ribosome. The stimulation of RF-1 and RF-2 is significantly reduced by GTP and GDP, but not by GMP. The protein is Peptide chain release factor 3 of Ectopseudomonas mendocina (strain ymp) (Pseudomonas mendocina).